The following is a 436-amino-acid chain: 3-ketoacyl-CoA thiolase (436 aa).

Cys-99 (acyl-thioester intermediate) is an active-site residue. Active-site proton acceptor residues include His-392 and Cys-422.

It belongs to the thiolase-like superfamily. Thiolase family. As to quaternary structure, heterotetramer of two alpha chains (FadJ) and two beta chains (FadI).

The protein resides in the cytoplasm. It carries out the reaction an acyl-CoA + acetyl-CoA = a 3-oxoacyl-CoA + CoA. It participates in lipid metabolism; fatty acid beta-oxidation. Catalyzes the final step of fatty acid oxidation in which acetyl-CoA is released and the CoA ester of a fatty acid two carbons shorter is formed. In Shewanella oneidensis (strain ATCC 700550 / JCM 31522 / CIP 106686 / LMG 19005 / NCIMB 14063 / MR-1), this protein is 3-ketoacyl-CoA thiolase.